A 161-amino-acid polypeptide reads, in one-letter code: MGCCYSSENEDSDQDREERKLLLDPSSTPTKALNGAEPNYHSLPSARTDEQALLSSILAKTASNIIDVSAADSQGMEQHEYMDRARQYSTRLAVLSSSLTHWKKLPPLPSLTSQPHQVLASEPIPFSDLQQVSRIAAYAYSALSQIRVDAKEELVVQFGIP.

The tract at residues 1–43 is disordered; it reads MGCCYSSENEDSDQDREERKLLLDPSSTPTKALNGAEPNYHSL. Residue Gly2 is the site of N-myristoyl glycine attachment. 2 S-palmitoyl cysteine lipidation sites follow: Cys3 and Cys4. Lys20 is covalently cross-linked (Glycyl lysine isopeptide (Lys-Gly) (interchain with G-Cter in ubiquitin)). At Ser27 the chain carries Phosphoserine. Thr28 carries the phosphothreonine modification. Residue Lys31 forms a Glycyl lysine isopeptide (Lys-Gly) (interchain with G-Cter in ubiquitin) linkage. Phosphoserine is present on residues Ser42 and Ser56. Residue Lys60 forms a Glycyl lysine isopeptide (Lys-Gly) (interchain with G-Cter in ubiquitin) linkage. Ser98 is modified (phosphoserine). Glycyl lysine isopeptide (Lys-Gly) (interchain with G-Cter in ubiquitin) cross-links involve residues Lys103 and Lys104. The interaction with LAMTOR2 and LAMTOR3 stretch occupies residues 121-161; the sequence is SEPIPFSDLQQVSRIAAYAYSALSQIRVDAKEELVVQFGIP. Ser141 carries the post-translational modification Phosphoserine.

It belongs to the LAMTOR1 family. As to quaternary structure, part of the Ragulator complex composed of LAMTOR1, LAMTOR2, LAMTOR3, LAMTOR4 and LAMTOR5. LAMTOR4 and LAMTOR5 form a heterodimer that interacts, through LAMTOR1, with a LAMTOR2, LAMTOR3 heterodimer. Interacts with LAMTOR2 and LAMTOR3; the interaction is direct. The Ragulator complex interacts with both the mTORC1 complex and heterodimers constituted of the Rag GTPases RagA/RRAGA, RagB/RRAGB, RagC/RRAGC and RagD/RRAGD; regulated by amino acid availability. The Ragulator complex interacts with SLC38A9; the probable amino acid sensor. Component of the lysosomal folliculin complex (LFC), composed of FLCN, FNIP1 (or FNIP2), RagA/RRAGA or RagB/RRAGB GDP-bound, RagC/RRAGC or RagD/RRAGD GTP-bound, and Ragulator. Associates with the lysosomal V-ATPase complex; interaction promotes the guanine nucleotide exchange factor (GEF) of the Ragulator complex. Interacts with MMP14. Interacts with CDKN1B; prevents the interaction of CDKN1B with RHOA leaving RHOA in a form accessible to activation by ARHGEF2. Interacts with PIP4P1. In terms of processing, N-terminal myristoylation and palmitoylation mediates its recruitment to lysosome membranes, thereby promoting localization of the Ragulator complex to lysosomes. N-myristoylation by NMT1 is required for palmitoylation at Cys-3 and Cys-4. Ubiquitinated at Lys-60, Lys-103 and Lys-104 by UBE3A in neurons, promoting its degradation by the proteasome, thereby limiting mTORC1 signaling and activity-dependent synaptic remodeling. Ubiquitination at Lys-20 impairs the association with the lysosomal V-ATPase complex. Deubiquitination at Lys-20 by USP32 promotes the association with the lysosomal V-ATPase complex and subsequent activation of the mTORC1 complex.

It is found in the lysosome membrane. The protein localises to the late endosome membrane. Its function is as follows. Key component of the Ragulator complex, a multiprotein complex involved in amino acid sensing and activation of mTORC1, a signaling complex promoting cell growth in response to growth factors, energy levels, and amino acids. Activated by amino acids through a mechanism involving the lysosomal V-ATPase, the Ragulator plays a dual role for the small GTPases Rag (RagA/RRAGA, RagB/RRAGB, RagC/RRAGC and/or RagD/RRAGD): it (1) acts as a guanine nucleotide exchange factor (GEF), activating the small GTPases Rag and (2) mediates recruitment of Rag GTPases to the lysosome membrane. Activated Ragulator and Rag GTPases function as a scaffold recruiting mTORC1 to lysosomes where it is in turn activated. LAMTOR1 is directly responsible for anchoring the Ragulator complex to the lysosomal membrane. LAMTOR1 wraps around the other subunits of the Ragulator complex to hold them in place and interacts with the Rag GTPases, thereby playing a key role in the recruitment of the mTORC1 complex to lysosomes. Also involved in the control of embryonic stem cells differentiation via non-canonical RagC/RRAGC and RagD/RRAGD activation: together with FLCN, it is necessary to recruit and activate RagC/RRAGC and RagD/RRAGD at the lysosomes, and to induce exit of embryonic stem cells from pluripotency via non-canonical, mTOR-independent TFE3 inactivation. Also required for late endosomes/lysosomes biogenesis it may regulate both the recycling of receptors through endosomes and the MAPK signaling pathway through recruitment of some of its components to late endosomes. May be involved in cholesterol homeostasis regulating LDL uptake and cholesterol release from late endosomes/lysosomes. May also play a role in RHOA activation. In Mus musculus (Mouse), this protein is Ragulator complex protein LAMTOR1.